The chain runs to 434 residues: MTAPASNITADKNAFFGADLAAADRDIFDRIGLELNRQQNQIELIASENIVSRAVLEAQGSILTNKYAEGYPGKRYYGGCEYVDEIETIAIERAKALFGAGFANVQPHSGSQANQSVFMALLQPGDTFLGMDLAAGGHLTHGSPANQSGKWFKPVSYTVRQQDQLIDYDAVEEVAQASKPKLIIAGGSAYSRQIDFARFRQIADSVGAYLMVDMAHFAGLVAGGVFPSPIPHAHVVTTTTHKTLRGPRGGMVLTNDEAIIKKVNSAVFPGLQGGPLEHVIAAKAVAFGEALQPAFKAYAQAVIDNARALAEALQTQGVNIVSGGTDSHLMLVDLRPKGVTGRDAEHSLERAHMTCNKNGVPFDTASFAVTSGIRLGTPAGTTRGFGAAEFTRVGQLIGEVVNGLAANGVDGNGAVEAKVREEVLALTARFPIYN.

Residues leucine 133 and 137–139 (GHL) each bind (6S)-5,6,7,8-tetrahydrofolate. Position 242 is an N6-(pyridoxal phosphate)lysine (lysine 242).

Belongs to the SHMT family. In terms of assembly, homodimer. Requires pyridoxal 5'-phosphate as cofactor.

The protein resides in the cytoplasm. It carries out the reaction (6R)-5,10-methylene-5,6,7,8-tetrahydrofolate + glycine + H2O = (6S)-5,6,7,8-tetrahydrofolate + L-serine. Its pathway is one-carbon metabolism; tetrahydrofolate interconversion. It functions in the pathway amino-acid biosynthesis; glycine biosynthesis; glycine from L-serine: step 1/1. Catalyzes the reversible interconversion of serine and glycine with tetrahydrofolate (THF) serving as the one-carbon carrier. This reaction serves as the major source of one-carbon groups required for the biosynthesis of purines, thymidylate, methionine, and other important biomolecules. Also exhibits THF-independent aldolase activity toward beta-hydroxyamino acids, producing glycine and aldehydes, via a retro-aldol mechanism. In Caulobacter sp. (strain K31), this protein is Serine hydroxymethyltransferase.